The primary structure comprises 362 residues: 1-aminocyclopropane-1-carboxylate oxidase homolog 10 (362 aa).

A Fe2OG dioxygenase domain is found at 211-310 (KGLFMLCHYY…RISVACFFSS (100 aa)). The Fe cation site is built by H235, D237, and H291. Residue R301 participates in 2-oxoglutarate binding.

Belongs to the iron/ascorbate-dependent oxidoreductase family. Fe(2+) is required as a cofactor.

This Arabidopsis thaliana (Mouse-ear cress) protein is 1-aminocyclopropane-1-carboxylate oxidase homolog 10.